Consider the following 348-residue polypeptide: MEDLYGILGVDHDASVDEIRRAYRRLARELHPDINPDSADRFKAVTHAYNILSDPEQRQRYDRHVSGGFSSDFNLSDLFQSFFDTSAEFQRGSDLLVNIDIDLKTAIYGGSQVVKIDSLVVCDVCNGTRSEPGYKAEVCFDCNGSGVVRGEVRTTLGNLITQNTCSKCRGNGERIDHPCRRCYGNGSRSAPRDITINIPPGVETGMRIKIPNMGNAGGAMPGDLYVDCKVKEHPYFLRDGQDLYCRLDISLVDALLGTKVKIDSLDGELAVVIPALSQNRDVIRIANKGAVTLRGGKGDLCIVLNVLLMQKLDPEHRALLKKIMPNPPKPKLAKRTSGFFSWLKNKFT.

In terms of domain architecture, J spans 3-65 (DLYGILGVDH…EQRQRYDRHV (63 aa)). The segment at 109–191 (GGSQVVKIDS…CYGNGSRSAP (83 aa)) adopts a CR-type zinc-finger fold. C122, C125, C139, C142, C165, C168, C179, and C182 together coordinate Zn(2+). 4 CXXCXGXG motif repeats span residues 122-129 (CDVCNGTR), 139-146 (CFDCNGSG), 165-172 (CSKCRGNG), and 179-186 (CRRCYGNG).

This sequence belongs to the DnaJ family. Homodimer. The cofactor is Zn(2+).

It localises to the cytoplasm. Functionally, participates actively in the response to hyperosmotic and heat shock by preventing the aggregation of stress-denatured proteins and by disaggregating proteins, also in an autonomous, DnaK-independent fashion. Unfolded proteins bind initially to DnaJ; upon interaction with the DnaJ-bound protein, DnaK hydrolyzes its bound ATP, resulting in the formation of a stable complex. GrpE releases ADP from DnaK; ATP binding to DnaK triggers the release of the substrate protein, thus completing the reaction cycle. Several rounds of ATP-dependent interactions between DnaJ, DnaK and GrpE are required for fully efficient folding. Also involved, together with DnaK and GrpE, in the DNA replication of plasmids through activation of initiation proteins. The protein is Chaperone protein DnaJ of Tropheryma whipplei (strain TW08/27) (Whipple's bacillus).